We begin with the raw amino-acid sequence, 715 residues long: Palmitoyltransferase ZDHHC5 (715 aa).

The Cytoplasmic portion of the chain corresponds to 1–13 (MPAESGKRFKPSK). A helical membrane pass occupies residues 14 to 34 (YVPVSAAAIFLVGATTLFFAF). The Extracellular portion of the chain corresponds to 35–38 (TCPG). A helical transmembrane segment spans residues 39–59 (LSLCVSPAVPIYNAIVFLFVL). Residues 60 to 148 (ANFSMATFMD…NCIGRRNYRY (89 aa)) are Cytoplasmic-facing. Position 91 is a phosphotyrosine (Tyr-91). The DHHC domain maps to 104–154 (KWCATCRFYRPPRCSHCSVCDNCVEEFDHHCPWVNNCIGRRNYRYFFLFLL). The S-palmitoyl cysteine intermediate role is filled by Cys-134. The chain crosses the membrane as a helical span at residues 149 to 169 (FFLFLLSLTAHIMGVFGFGLL). The Extracellular portion of the chain corresponds to 170–191 (YVLYHMEELSGVRTAVTMAVMC). The chain crosses the membrane as a helical span at residues 192 to 212 (VAGLFFIPVAGLTGFHVVLVA). Residues 213–715 (RGRTTNEQVT…VGGTTYEISV (503 aa)) are Cytoplasmic-facing. Phosphoserine is present on residues Ser-247, Ser-296, and Ser-299. A disordered region spans residues 289–648 (GELRRSKSKG…SQKAPAGVSE (360 aa)). A Phosphothreonine modification is found at Thr-303. Ser-345 is subject to Phosphoserine. 2 positions are modified to phosphothreonine: Thr-348 and Thr-350. Over residues 359–373 (SSSSTSAAMPHSSSA) the composition is skewed to low complexity. Residues Ser-380, Ser-398, Ser-406, and Ser-409 each carry the phosphoserine modification. A Phosphothreonine modification is found at Thr-411. Phosphoserine occurs at positions 415, 425, 429, and 432. Positions 422-432 (SSGSRSSSLKS) are enriched in low complexity. Thr-436 is subject to Phosphothreonine. Positions 442–478 (QLQSIRSEGTTSTSYKSLANQTRNGSLSYDSLLTPSD) are enriched in polar residues. Phosphoserine is present on residues Ser-529 and Ser-554. Arg-617 bears the Omega-N-methylarginine mark. Ser-621 is subject to Phosphoserine. A Phosphothreonine modification is found at Thr-659. Positions 666-715 (LKTAYSKSNGQPKSIGSASPGPGQQPLSSPTRGGVKKVSGVGGTTYEISV) are disordered. Residues 668–679 (TAYSKSNGQPKS) show a composition bias toward polar residues. Positions 681–695 (GSASPGPGQQPLSSP) are enriched in low complexity. Phosphoserine occurs at positions 684 and 694. An Omega-N-methylarginine modification is found at Arg-697.

This sequence belongs to the DHHC palmitoyltransferase family. ERF2/ZDHHC9 subfamily. Post-translationally, phosphorylation regulates association with endocytic proteins and its subcellular localization. Phosphorylation by LYN during fatty acid uptake leads to inactivation of the activity. In terms of processing, autopalmitoylated. Palmitoylation of the C-terminal tail regulates stimulation-dependent plasma membrane motility.

Its subcellular location is the cell membrane. The enzyme catalyses L-cysteinyl-[protein] + hexadecanoyl-CoA = S-hexadecanoyl-L-cysteinyl-[protein] + CoA. In terms of biological role, palmitoyltransferase that catalyzes the addition of palmitate onto various protein substrates such as CTNND2, CD36, GSDMD, NLRP3, NOD1, NOD2, STAT3 and S1PR1 thus plays a role in various biological processes including cell adhesion, inflammation, fatty acid uptake, bacterial sensing or cardiac functions. Plays an important role in the regulation of synapse efficacy by mediating palmitoylation of delta-catenin/CTNND2, thereby increasing synaptic delivery and surface stabilization of alpha-amino-3-hydroxy-5-methyl-4-isoxazole propionic acid receptors (AMPARs). Under basal conditions, remains at the synaptic membrane through FYN-mediated phosphorylation that prevents association with endocytic proteins. Neuronal activity enhances the internalization and trafficking of DHHC5 from spines to dendritic shafts where it palmitoylates delta-catenin/CTNND2. Regulates cell adhesion at the plasma membrane by palmitoylating GOLGA7B and DSG2. Plays a role in innate immune response by mediating the palmitoylation of NOD1 and NOD2 and their proper recruitment to the bacterial entry site and phagosomes. Also participates in fatty acid uptake by palmitoylating CD36 and thereby targeting it to the plasma membrane. Upon binding of fatty acids to CD36, gets phosphorylated by LYN leading to inactivation and subsequent CD36 caveolar endocytosis. Controls oligodendrocyte development by catalyzing STAT3 palmitoylation. Acts as a regulator of inflammatory response by mediating palmitoylation of NLRP3 and GSDMD. Palmitoylates NLRP3 to promote inflammasome assembly and activation. Activates pyroptosis by catalyzing palmitoylation of gasdermin-D (GSDMD), thereby promoting membrane translocation and pore formation of GSDMD. In Canis lupus familiaris (Dog), this protein is Palmitoyltransferase ZDHHC5 (ZDHHC5).